The sequence spans 1165 residues: uncharacterized protein (1165 aa).

The tract at residues 422-442 (EAAPPRPPRKSKAPEPTGDKA) is disordered.

This is an uncharacterized protein from Frog virus 3 (isolate Goorha) (FV-3).